The following is a 301-amino-acid chain: Heme A synthase (301 aa).

At 1-5 (MHKKL) the chain is on the cytoplasmic side. The helical transmembrane segment at 6-26 (AFFSGFVTLGMMLVLIMGGTV) threads the bilayer. At 27 to 62 (TKTDSGDGCGTDWPLCHGKLIPTNPSVETMIEYSHR) the chain is on the extracellular side. A disulfide bridge connects residues Cys35 and Cys42. Residue Glu58 is part of the active site. A heme o-binding site is contributed by His61. The chain crosses the membrane as a helical span at residues 63–83 (VVSGIEGLLIIALAIWTFIAV). Topologically, residues 84–90 (KHRVDVK) are cytoplasmic. A helical transmembrane segment spans residues 91–111 (IFAFLAFIFMLIQSIIGAGAV). Over 112–121 (IWQQSDAILA) the chain is Extracellular. The helical transmembrane segment at 122–142 (LHFGISLVSFASLLILTILLF) threads the bilayer. His123 contributes to the heme o binding site. The Cytoplasmic portion of the chain corresponds to 143-158 (EGDREHQVVSRRLRSH). Residues 159-179 (LYGLSIYTMIVVYTGAYVRHL) form a helical membrane-spanning segment. Topologically, residues 180-203 (GATYACVGWPICEQEVWTFESYVQ) are extracellular. Cys185 and Cys191 form a disulfide bridge. Residues 204–224 (MGHRVMAGLLVLYTLYVLYLA) form a helical membrane-spanning segment. His206 is a heme b binding site. Residues 225 to 234 (RKEMNRLIER) lie on the Cytoplasmic side of the membrane. The helical transmembrane segment at 235–255 (GMMASLFFILLQVGTGAWIVL) threads the bilayer. The Extracellular segment spans residues 256-259 (GGHA). Residues 260–280 (TYVPLLHAFLITCYFGILSYL) traverse the membrane as a helical segment. His266 contacts heme b. Residues 281–301 (SYHAYRSTARQDGAQLKNMNG) are Cytoplasmic-facing.

The protein belongs to the COX15/CtaA family. Type 1 subfamily. As to quaternary structure, interacts with CtaB. Requires heme b as cofactor.

Its subcellular location is the cell membrane. The enzyme catalyses Fe(II)-heme o + 2 A + H2O = Fe(II)-heme a + 2 AH2. It participates in porphyrin-containing compound metabolism; heme A biosynthesis; heme A from heme O: step 1/1. Catalyzes the conversion of heme O to heme A by two successive hydroxylations of the methyl group at C8. The first hydroxylation forms heme I, the second hydroxylation results in an unstable dihydroxymethyl group, which spontaneously dehydrates, resulting in the formyl group of heme A. The polypeptide is Heme A synthase (Exiguobacterium sp. (strain ATCC BAA-1283 / AT1b)).